Consider the following 924-residue polypeptide: MLGGLARKIFGSANDRRVRGYRPSVEAINKLEPELETLTDEQLRERTVMFRQQLAEGKTLDDLLVPAFATVREAAKRVMGMRHFDVQLIGGMVLHDAGIAEMRTGEGKTLVATLPVYLNALAGKGVHVVTVNDYLARRDAEWMAKVYGFLGLTTGIIVHGLDDDQRRAAYACDVTYATNNELGFDYLRDNMKYERAQMVQRPHYFAIVDEVDSILIDEARTPLIISGPLDDRSDFYNTIDKFIPRLSKGDYEVDEKQRSVAMTEAGMEKMEQMLTEAELLKSGSLYDIENVSIVHHVNQALRAHSLFQRDKDYIVRNDEVVIIDEFTGRMMPGRRYSEGLHQALEAKERVTVQPENQTLASITFQNYFRLYERLGGMTGTAATEAAEFADIYKLDVVEIPTNRKVQRIDDDDEVYRTNREKFDAIVKLIQECAARKQPVLVGTTSIEKSELLAERLKQAGMRQKDFSDRAAFTGSSDGKSFAVLNARYHEQEAFIVAQAGVPGAVTIATNMAGRGTDIQLGGNAEMRISEELADLPAGPEREAAEAKIREEIAALKQEALAAGGLFVLGTERHESRRIDNQLRGRSGRQGDPGHSKFFLSLEDDLMRIFGSDRLEGMLKRLGLQEGEAIIHPWINRALEKAQQKVEARNYDMRKNVLKYDDVLNDQRKVVFEQRLELMNDEDVAETVVDMRHDVITDLVAKYIPVNSYPEQWDVKGLDFAVRDVLTLALPIEDWAKEEGIAGPEVTERIIQKADEWMASKSAQYGPELMRYVEKSILLQTLDHLWREHIAMLDHLRQVIGLRGYGQRDPLQEYKSEAFQLFSAMLGRLREIVTAQLMRVEIVSTPQPTELPPMEAHHIDASTGEDELASAGAALSARPELALATEVPAADRDPNDPSTWGKVGRNEPCPCGSGKKFKHCHGRFA.

Residues Q87, G105–T109, and D517 contribute to the ATP site. Residues V886–E906 form a disordered region. Residues C908, C910, C919, and H920 each contribute to the Zn(2+) site.

Belongs to the SecA family. Monomer and homodimer. Part of the essential Sec protein translocation apparatus which comprises SecA, SecYEG and auxiliary proteins SecDF-YajC and YidC. It depends on Zn(2+) as a cofactor.

It is found in the cell inner membrane. Its subcellular location is the cytoplasm. It catalyses the reaction ATP + H2O + cellular proteinSide 1 = ADP + phosphate + cellular proteinSide 2.. Part of the Sec protein translocase complex. Interacts with the SecYEG preprotein conducting channel. Has a central role in coupling the hydrolysis of ATP to the transfer of proteins into and across the cell membrane, serving both as a receptor for the preprotein-SecB complex and as an ATP-driven molecular motor driving the stepwise translocation of polypeptide chains across the membrane. This is Protein translocase subunit SecA from Azorhizobium caulinodans (strain ATCC 43989 / DSM 5975 / JCM 20966 / LMG 6465 / NBRC 14845 / NCIMB 13405 / ORS 571).